The primary structure comprises 242 residues: Uridylate kinase (242 aa).

Position 16–19 (16–19) interacts with ATP; the sequence is KISG. Residues 24-29 form an involved in allosteric activation by GTP region; that stretch reads GDQGFG. G58 is a UMP binding site. 2 residues coordinate ATP: G59 and R63. UMP is bound by residues D78 and 139-146; that span reads TGNPYFTT. ATP contacts are provided by T166, Y172, and D175.

This sequence belongs to the UMP kinase family. As to quaternary structure, homohexamer.

The protein resides in the cytoplasm. The enzyme catalyses UMP + ATP = UDP + ADP. It participates in pyrimidine metabolism; CTP biosynthesis via de novo pathway; UDP from UMP (UMPK route): step 1/1. With respect to regulation, allosterically activated by GTP. Inhibited by UTP. In terms of biological role, catalyzes the reversible phosphorylation of UMP to UDP. This chain is Uridylate kinase, found in Roseobacter denitrificans (strain ATCC 33942 / OCh 114) (Erythrobacter sp. (strain OCh 114)).